The following is a 180-amino-acid chain: UDP-4-amino-4,6-dideoxy-N-acetyl-beta-L-altrosamine N-acetyltransferase (180 aa).

Residues 13–169 form the N-acetyltransferase domain; it reads IDFTNLNDGE…IDVLLYYKDK (157 aa).

The catalysed reaction is UDP-4-amino-4,6-dideoxy-N-acetyl-beta-L-altrosamine + acetyl-CoA = UDP-2,4-diacetamido-2,4,6-trideoxy-beta-L-altrose + CoA + H(+). In terms of biological role, catalyzes the third step in the biosynthesis of pseudaminic acid, a sialic-acid-like sugar that is used to modify flagellin. Mediates N-4 acetylation of UDP-4-amino-4,6-dideoxy-beta-L-AltNAc to form UDP-2,4-diacetamido-2,4,6-trideoxy-beta-L-altropyranose. The polypeptide is UDP-4-amino-4,6-dideoxy-N-acetyl-beta-L-altrosamine N-acetyltransferase (pseH) (Helicobacter pylori (strain ATCC 700392 / 26695) (Campylobacter pylori)).